A 1087-amino-acid polypeptide reads, in one-letter code: Error-prone DNA polymerase 2 (1087 aa).

The segment at 1033-1064 is disordered; it reads DGAFRPPTGRGDEFAHGSPGSADSRGKAPPGV.

The protein belongs to the DNA polymerase type-C family. DnaE2 subfamily.

Its subcellular location is the cytoplasm. The catalysed reaction is DNA(n) + a 2'-deoxyribonucleoside 5'-triphosphate = DNA(n+1) + diphosphate. Its function is as follows. DNA polymerase involved in damage-induced mutagenesis and translesion synthesis (TLS). It is not the major replicative DNA polymerase. The polypeptide is Error-prone DNA polymerase 2 (Rhizobium meliloti (strain 1021) (Ensifer meliloti)).